The sequence spans 418 residues: Putative competence-damage inducible protein (418 aa).

It belongs to the CinA family.

The chain is Putative competence-damage inducible protein from Streptococcus pneumoniae (strain 70585).